The chain runs to 134 residues: Putative F-box protein R638 (134 aa).

An F-box domain is found at 5 to 52; the sequence is NIMNLLNEDCILHILSFLADKDKIQLSLSCKSNLKFLHKTIYDDIYFY.

In Acanthamoeba polyphaga mimivirus (APMV), this protein is Putative F-box protein R638.